The primary structure comprises 55 residues: Large ribosomal subunit protein bL33 (55 aa).

This sequence belongs to the bacterial ribosomal protein bL33 family.

In Bifidobacterium longum (strain DJO10A), this protein is Large ribosomal subunit protein bL33.